The primary structure comprises 122 residues: Large ribosomal subunit protein uL18 (122 aa).

The protein belongs to the universal ribosomal protein uL18 family. As to quaternary structure, part of the 50S ribosomal subunit; part of the 5S rRNA/L5/L18/L25 subcomplex. Contacts the 5S and 23S rRNAs.

In terms of biological role, this is one of the proteins that bind and probably mediate the attachment of the 5S RNA into the large ribosomal subunit, where it forms part of the central protuberance. The chain is Large ribosomal subunit protein uL18 from Lachnospira eligens (strain ATCC 27750 / DSM 3376 / VPI C15-48 / C15-B4) (Eubacterium eligens).